The primary structure comprises 643 residues: tRNA 5-methylaminomethyl-2-thiouridine biosynthesis bifunctional protein MnmC (643 aa).

The interval 1–223 (MPDRLVSATL…VDDRLVGDYA (223 aa)) is tRNA (mnm(5)s(2)U34)-methyltransferase. The interval 247-643 (IGAGLAGCAV…LRARRVGSAG (397 aa)) is FAD-dependent cmnm(5)s(2)U34 oxidoreductase.

The protein in the N-terminal section; belongs to the methyltransferase superfamily. tRNA (mnm(5)s(2)U34)-methyltransferase family. It in the C-terminal section; belongs to the DAO family. FAD serves as cofactor.

It is found in the cytoplasm. The catalysed reaction is 5-aminomethyl-2-thiouridine(34) in tRNA + S-adenosyl-L-methionine = 5-methylaminomethyl-2-thiouridine(34) in tRNA + S-adenosyl-L-homocysteine + H(+). Catalyzes the last two steps in the biosynthesis of 5-methylaminomethyl-2-thiouridine (mnm(5)s(2)U) at the wobble position (U34) in tRNA. Catalyzes the FAD-dependent demodification of cmnm(5)s(2)U34 to nm(5)s(2)U34, followed by the transfer of a methyl group from S-adenosyl-L-methionine to nm(5)s(2)U34, to form mnm(5)s(2)U34. This chain is tRNA 5-methylaminomethyl-2-thiouridine biosynthesis bifunctional protein MnmC, found in Burkholderia orbicola (strain MC0-3).